We begin with the raw amino-acid sequence, 642 residues long: Threonine--tRNA ligase (642 aa).

In terms of domain architecture, TGS spans 1 to 61 (MPVITLPDGS…ENDAQLSIIT (61 aa)). Residues 243–534 (DHRKIGKQLD…LTEEFAGFFP (292 aa)) are catalytic. Residues Cys-334, His-385, and His-511 each coordinate Zn(2+).

It belongs to the class-II aminoacyl-tRNA synthetase family. As to quaternary structure, homodimer. Zn(2+) is required as a cofactor.

Its subcellular location is the cytoplasm. It carries out the reaction tRNA(Thr) + L-threonine + ATP = L-threonyl-tRNA(Thr) + AMP + diphosphate + H(+). Functionally, catalyzes the attachment of threonine to tRNA(Thr) in a two-step reaction: L-threonine is first activated by ATP to form Thr-AMP and then transferred to the acceptor end of tRNA(Thr). Also edits incorrectly charged L-seryl-tRNA(Thr). This is Threonine--tRNA ligase from Enterobacter sp. (strain 638).